Reading from the N-terminus, the 256-residue chain is uncharacterized protein (256 aa).

A signal peptide spans 1 to 24; that stretch reads MIKRVNKLVLGISLLFLVISITAG. Cys25 carries the N-palmitoyl cysteine lipid modification. A lipid anchor (S-diacylglycerol cysteine) is attached at Cys25.

It belongs to the staphylococcal tandem lipoprotein family.

It is found in the cell membrane. This is an uncharacterized protein from Staphylococcus aureus (strain NCTC 8325 / PS 47).